A 214-amino-acid chain; its full sequence is Adenylate kinase (214 aa).

10 to 15 provides a ligand contact to ATP; the sequence is GAGKGT. An NMP region spans residues 30–59; the sequence is STGDMFRAAIKEGTELGKQAKALMDEGKLV. AMP-binding positions include threonine 31, arginine 36, 57-59, 85-88, and glutamine 92; these read KLV and GFPR. Residues 122 to 159 form an LID region; sequence GRRVHQPSGRTYHVVYNPPKVEGKDDVTGEDLIIRQDD. Residues arginine 123 and 132–133 each bind ATP; that span reads TY. Residues arginine 156 and arginine 167 each contribute to the AMP site. Lysine 200 serves as a coordination point for ATP.

It belongs to the adenylate kinase family. In terms of assembly, monomer.

It localises to the cytoplasm. It catalyses the reaction AMP + ATP = 2 ADP. Its pathway is purine metabolism; AMP biosynthesis via salvage pathway; AMP from ADP: step 1/1. Catalyzes the reversible transfer of the terminal phosphate group between ATP and AMP. Plays an important role in cellular energy homeostasis and in adenine nucleotide metabolism. In Actinobacillus pleuropneumoniae serotype 5b (strain L20), this protein is Adenylate kinase.